Reading from the N-terminus, the 304-residue chain is HTH-type transcriptional regulator AdmX (304 aa).

The HTH lysR-type domain maps to 1–58 (MKLRHLEIFYTVMTCGSLSRAAESLNISQPAASKSLKNAELKLGFKLFQRVRGKLLPS). Residues 18–37 (LSRAAESLNISQPAASKSLK) constitute a DNA-binding region (H-T-H motif).

It belongs to the LysR transcriptional regulatory family.

Its subcellular location is the cytoplasm. Its activity is regulated as follows. AdmX-mediated transcription is inhibited by indole-3-acetic and indole-3-pyruvic acids. AdmX recognizes and binds the auxin indole-3-acetic acid (IAA), which causes conformational changes in AdmX that result in the inhibition of the expression of the andrimid gene cluster and the suppression of antibiotic production. It also recognizes indole-3-pyruvic acid (IPA), an intermediate of the main IAA biosynthetic pathway in plants and plant beneficial bacteria, which also prevents andrimid synthesis, but to a much lesser extent. Its function is as follows. Positively regulates the biosynthesis of andrimid, a broad-spectrum antibiotic, by activating the expression of the adm biosynthetic gene cluster. It specifically binds to a region within the adm promoter. The chain is HTH-type transcriptional regulator AdmX from Serratia plymuthica.